The primary structure comprises 101 residues: Citrate lyase acyl carrier protein (101 aa).

Ser14 bears the O-(phosphoribosyl dephospho-coenzyme A)serine mark.

It belongs to the CitD family. Oligomer with a subunit composition of (alpha,beta,gamma)6.

It is found in the cytoplasm. Its function is as follows. Covalent carrier of the coenzyme of citrate lyase. In Latilactobacillus sakei subsp. sakei (strain 23K) (Lactobacillus sakei subsp. sakei), this protein is Citrate lyase acyl carrier protein.